The sequence spans 1040 residues: uncharacterized protein (1040 aa).

Positions 403–588 (RLEESSKKGG…YSLIKFLRIK (186 aa)) constitute a Helicase ATP-binding domain. Residue 416 to 423 (DDMGLGKT) participates in ATP binding. An RING-type zinc finger spans residues 746–798 (CSLCMDVVAELLIIVPCGHFLCRECLTHVITSSEDMAKQTSNENISPKCSVCE). The region spanning 866–1032 (KIEKALNAVK…ISRLNTKELS (167 aa)) is the Helicase C-terminal domain.

It belongs to the SNF2/RAD54 helicase family.

Its subcellular location is the nucleus. This is an uncharacterized protein from Schizosaccharomyces pombe (strain 972 / ATCC 24843) (Fission yeast).